The sequence spans 61 residues: uncharacterized protein (61 aa).

This is an uncharacterized protein from Autographa californica nuclear polyhedrosis virus (AcMNPV).